The following is a 392-amino-acid chain: Formate-dependent phosphoribosylglycinamide formyltransferase (392 aa).

N(1)-(5-phospho-beta-D-ribosyl)glycinamide contacts are provided by residues 22-23 (EL) and Glu-82. ATP contacts are provided by residues Arg-114, Lys-155, 160–165 (SSGKGQ), 195–198 (EGVV), and Glu-203. An ATP-grasp domain is found at 119-308 (RLAAEELQLP…EFALHVRAFL (190 aa)). The Mg(2+) site is built by Glu-267 and Glu-279. N(1)-(5-phospho-beta-D-ribosyl)glycinamide is bound by residues Asp-286, Lys-355, and 362-363 (RR).

The protein belongs to the PurK/PurT family. As to quaternary structure, homodimer.

The enzyme catalyses N(1)-(5-phospho-beta-D-ribosyl)glycinamide + formate + ATP = N(2)-formyl-N(1)-(5-phospho-beta-D-ribosyl)glycinamide + ADP + phosphate + H(+). The protein operates within purine metabolism; IMP biosynthesis via de novo pathway; N(2)-formyl-N(1)-(5-phospho-D-ribosyl)glycinamide from N(1)-(5-phospho-D-ribosyl)glycinamide (formate route): step 1/1. Its function is as follows. Involved in the de novo purine biosynthesis. Catalyzes the transfer of formate to 5-phospho-ribosyl-glycinamide (GAR), producing 5-phospho-ribosyl-N-formylglycinamide (FGAR). Formate is provided by PurU via hydrolysis of 10-formyl-tetrahydrofolate. In Klebsiella pneumoniae (strain 342), this protein is Formate-dependent phosphoribosylglycinamide formyltransferase.